The following is a 71-amino-acid chain: MPAVKVKENEPFDVALRRFKRSCEKAGVLAEVRSREFYEKPTAERKRKAAAAVKRHAKKVQREQRRRERLY.

The span at 48–59 shows a compositional bias: basic residues; that stretch reads KAAAAVKRHAKK. The segment at 48–71 is disordered; the sequence is KAAAAVKRHAKKVQREQRRRERLY. The segment covering 60-71 has biased composition (basic and acidic residues); the sequence is VQREQRRRERLY.

Belongs to the bacterial ribosomal protein bS21 family.

This Azotobacter vinelandii (strain DJ / ATCC BAA-1303) protein is Small ribosomal subunit protein bS21.